The primary structure comprises 892 residues: Protein RRP6-like 3 (892 aa).

Positions Tyr119–Lys287 constitute a 3'-5' exonuclease domain. The HRDC domain occupies Ser350–Met436. A disordered region spans residues Val785–Leu811.

It is found in the cytoplasm. It localises to the cytosol. The sequence is that of Protein RRP6-like 3 from Arabidopsis thaliana (Mouse-ear cress).